The primary structure comprises 299 residues: Oxygen-dependent coproporphyrinogen-III oxidase (299 aa).

Ser-92 is a substrate binding site. A divalent metal cation is bound by residues His-96 and His-106. Catalysis depends on His-106, which acts as the Proton donor. Position 108–110 (Asn-108–Arg-110) interacts with substrate. Residues His-145 and His-175 each contribute to the a divalent metal cation site. Residues Tyr-240 to Glu-275 form an important for dimerization region. Gly-258–Arg-260 contacts substrate.

This sequence belongs to the aerobic coproporphyrinogen-III oxidase family. As to quaternary structure, homodimer. A divalent metal cation is required as a cofactor.

The protein localises to the cytoplasm. The catalysed reaction is coproporphyrinogen III + O2 + 2 H(+) = protoporphyrinogen IX + 2 CO2 + 2 H2O. It participates in porphyrin-containing compound metabolism; protoporphyrin-IX biosynthesis; protoporphyrinogen-IX from coproporphyrinogen-III (O2 route): step 1/1. Functionally, involved in the heme biosynthesis. Catalyzes the aerobic oxidative decarboxylation of propionate groups of rings A and B of coproporphyrinogen-III to yield the vinyl groups in protoporphyrinogen-IX. The protein is Oxygen-dependent coproporphyrinogen-III oxidase of Klebsiella pneumoniae (strain 342).